A 536-amino-acid polypeptide reads, in one-letter code: SNW domain-containing protein 1 (536 aa).

The interval 1-46 is disordered; sequence MALTSFLPAPTQLSQDQLEAEEKARSQRSRQTSLVSSRREPPPYGY. Alanine 2 is modified (N-acetylalanine). Serine 14 bears the Phosphoserine mark. A Glycyl lysine isopeptide (Lys-Gly) (interchain with G-Cter in SUMO2) cross-link involves residue lysine 23. The interaction with PPIL1 stretch occupies residues 59 to 79; the sequence is GDGGAFPEIHVAQYPLDMGRK. Glycyl lysine isopeptide (Lys-Gly) (interchain with G-Cter in SUMO2) cross-links involve residues lysine 81, lysine 97, lysine 115, lysine 122, lysine 141, lysine 158, and lysine 170. Positions 174–339 are SNW; sequence AQYIRYTPSQ…KARERRAGIK (166 aa). Phosphoserine is present on residues serine 182 and serine 190. A Glycyl lysine isopeptide (Lys-Gly) (interchain with G-Cter in SUMO2) cross-link involves residue lysine 193. A disordered region spans residues 209–233; that stretch reads PPRFKINKKIPRGPPSPPAPVMHSP. Residues serine 224, serine 232, and serine 234 each carry the phosphoserine modification. Residues lysine 240, lysine 258, lysine 286, lysine 339, lysine 344, lysine 416, and lysine 441 each participate in a glycyl lysine isopeptide (Lys-Gly) (interchain with G-Cter in SUMO2) cross-link. Residues 311-386 form a disordered region; sequence KMAQKEKEKH…RSKLQRNENR (76 aa). Serine 446 carries the post-translational modification Phosphoserine. Lysine 452 is covalently cross-linked (Glycyl lysine isopeptide (Lys-Gly) (interchain with G-Cter in SUMO2)). 2 stretches are compositionally biased toward basic and acidic residues: residues 470–489 and 503–530; these read NRFV…RGRE and KFLE…EHEG. Residues 470–536 are disordered; it reads NRFVPDKEFS…EHEGKKRRKE (67 aa). Serine 479 and serine 481 each carry phosphoserine. A Glycyl lysine isopeptide (Lys-Gly) (interchain with G-Cter in SUMO2) cross-link involves residue lysine 509.

This sequence belongs to the SNW family. As to quaternary structure, identified in the spliceosome C complex. Associates with U4/U6-U5 tri-small nuclear ribonucleoproteins (U4/U6-U5 tri-snRNPs). Component of the minor spliceosome, which splices U12-type introns. Interacts with SKI, SMAD2,SMAD3, RBPJ, RB1, PABPN1, MAGEA1, SIRT1, FOXN3, U2AF2, DAXX and ATP1B4. Interacts with PPIL1. Interacts with VDR and RXRA; preferentially associates with VDR:RXRA heterodimers. Interacts with NCOR2. Interacts with MAML1. Interacts with NOTCH1 NICD; the interaction involves multimerized NOTCH1 NICD. Forms a complex with NOTCH1 NICD and MAML1; the association is dissociated by RBPJ. Associates with positive transcription elongation factor b (P-TEFb). Component of the SNARP complex which consists at least of SNIP1, SNW1, THRAP3, BCLAF1 and PNN. In terms of assembly, (Microbial infection) Interacts with human papillomavirus type-16 (HPV16) E7 protein. (Microbial infection) Interacts with EBV EBNA2; EBNA2 competes with NCOR2 for interaction with SNW1.

The protein resides in the nucleus. Its function is as follows. Involved in pre-mRNA splicing as component of the spliceosome. As a component of the minor spliceosome, involved in the splicing of U12-type introns in pre-mRNAs. Required for the specific splicing of CDKN1A pre-mRNA; the function probably involves the recruitment of U2AF2 to the mRNA. May recruit PPIL1 to the spliceosome. May be involved in cyclin-D1/CCND1 mRNA stability through the SNARP complex which associates with both the 3'end of the CCND1 gene and its mRNA. Involved in transcriptional regulation. Modulates TGF-beta-mediated transcription via association with SMAD proteins, MYOD1-mediated transcription via association with PABPN1, RB1-mediated transcriptional repression, and retinoid-X receptor (RXR)- and vitamin D receptor (VDR)-dependent gene transcription in a cell line-specific manner probably involving coactivators NCOA1 and GRIP1. Is involved in NOTCH1-mediated transcriptional activation. Binds to multimerized forms of Notch intracellular domain (NICD) and is proposed to recruit transcriptional coactivators such as MAML1 to form an intermediate preactivation complex which associates with DNA-bound CBF-1/RBPJ to form a transcriptional activation complex by releasing SNW1 and redundant NOTCH1 NICD. In terms of biological role, (Microbial infection) Is recruited by HIV-1 Tat to Tat:P-TEFb:TAR RNA complexes and is involved in Tat transcription by recruitment of MYC, MEN1 and TRRAP to the HIV promoter. (Microbial infection) Proposed to be involved in transcriptional activation by EBV EBNA2 of CBF-1/RBPJ-repressed promoters. In Homo sapiens (Human), this protein is SNW domain-containing protein 1 (SNW1).